A 271-amino-acid polypeptide reads, in one-letter code: Protein phosphatase 1 regulatory subunit 3B-B (271 aa).

Positions 56 to 59 (RVSF) match the PP1-binding motif motif. Positions 119 to 227 (RNRLKADSVC…SNKGLNYRIV (109 aa)) constitute a CBM21 domain.

Interacts with glycogen, PPP1CC catalytic subunit of PP1 and PYGL. Associates with glycogen particles. Forms complexes with debranching enzyme, glycogen phosphorylase, glycogen synthase and phosphorylase kinase which is necessary for its regulation of PP1 activity.

In terms of biological role, acts as a glycogen-targeting subunit for phosphatase PP1. Facilitates interaction of the PP1 with enzymes of the glycogen metabolism and regulates its activity. Suppresses the rate at which PP1 dephosphorylates (inactivates) glycogen phosphorylase and enhances the rate at which it activates glycogen synthase and therefore limits glycogen breakdown. The sequence is that of Protein phosphatase 1 regulatory subunit 3B-B (ppp1r3b-b) from Xenopus laevis (African clawed frog).